A 182-amino-acid polypeptide reads, in one-letter code: Protein YopQ (182 aa).

Positions 1-24 (MFIKDAYNMRALCTALEQSAPDTI) are cleaved as a signal peptide.

It localises to the secreted. Its function is as follows. May function as a virulence determinant. The polypeptide is Protein YopQ (yopQ) (Yersinia enterocolitica).